The primary structure comprises 87 residues: Bombyxin B-10 (87 aa).

An N-terminal signal peptide occupies residues 1-19 (MKTILIFLVVISLMYSGEA). Cystine bridges form between Cys27–Cys73, Cys39–Cys86, and Cys72–Cys77. Residues 46–64 (SGAQYAPYFWTRQYLGSRG) constitute a propeptide, bombyxin B-10 C peptide.

Belongs to the insulin family. As to quaternary structure, heterodimer of a B chain and an A chain linked by two disulfide bonds.

It is found in the secreted. In terms of biological role, brain peptide responsible for activation of prothoracic glands to produce ecdysone in insects. In Bombyx mori (Silk moth), this protein is Bombyxin B-10 (BBXB10).